The following is a 148-amino-acid chain: Transcriptional regulator MraZ (148 aa).

2 consecutive SpoVT-AbrB domains span residues 5–53 (ETAI…AESE) and 82–125 (AAHL…SEQA).

It belongs to the MraZ family. As to quaternary structure, forms oligomers.

It is found in the cytoplasm. Its subcellular location is the nucleoid. This is Transcriptional regulator MraZ from Stenotrophomonas maltophilia (strain R551-3).